A 71-amino-acid chain; its full sequence is MAATIKKGALVRVVTGNLENSLEALASDRRLPSYMFNSTAEVLDVKDDYALIKFYVPTPSVWLKLEQLEPV.

Belongs to the complex I NdhO subunit family. In terms of assembly, NDH-1 can be composed of about 15 different subunits; different subcomplexes with different compositions have been identified which probably have different functions.

It is found in the cellular thylakoid membrane. The catalysed reaction is a plastoquinone + NADH + (n+1) H(+)(in) = a plastoquinol + NAD(+) + n H(+)(out). It carries out the reaction a plastoquinone + NADPH + (n+1) H(+)(in) = a plastoquinol + NADP(+) + n H(+)(out). NDH-1 shuttles electrons from an unknown electron donor, via FMN and iron-sulfur (Fe-S) centers, to quinones in the respiratory and/or the photosynthetic chain. The immediate electron acceptor for the enzyme in this species is believed to be plastoquinone. Couples the redox reaction to proton translocation, and thus conserves the redox energy in a proton gradient. Cyanobacterial NDH-1 also plays a role in inorganic carbon-concentration. This chain is NAD(P)H-quinone oxidoreductase subunit O, found in Microcystis aeruginosa (strain NIES-843 / IAM M-2473).